A 358-amino-acid polypeptide reads, in one-letter code: DNA polymerase IV (358 aa).

A UmuC domain is found at 4 to 185; that stretch reads IIHIDMDCYF…LPLIKIPGVG (182 aa). Mg(2+)-binding residues include Asp-8 and Asp-103. Residue Glu-104 is part of the active site.

The protein belongs to the DNA polymerase type-Y family. In terms of assembly, monomer. Requires Mg(2+) as cofactor.

The protein resides in the cytoplasm. The enzyme catalyses DNA(n) + a 2'-deoxyribonucleoside 5'-triphosphate = DNA(n+1) + diphosphate. Its function is as follows. Poorly processive, error-prone DNA polymerase involved in untargeted mutagenesis. Copies undamaged DNA at stalled replication forks, which arise in vivo from mismatched or misaligned primer ends. These misaligned primers can be extended by PolIV. Exhibits no 3'-5' exonuclease (proofreading) activity. May be involved in translesional synthesis, in conjunction with the beta clamp from PolIII. The polypeptide is DNA polymerase IV (Shewanella denitrificans (strain OS217 / ATCC BAA-1090 / DSM 15013)).